The following is a 396-amino-acid chain: NADH-quinone oxidoreductase subunit D (396 aa).

This sequence belongs to the complex I 49 kDa subunit family. NDH-1 is composed of 14 different subunits. Subunits NuoB, C, D, E, F, and G constitute the peripheral sector of the complex.

The protein resides in the cell inner membrane. It carries out the reaction a quinone + NADH + 5 H(+)(in) = a quinol + NAD(+) + 4 H(+)(out). NDH-1 shuttles electrons from NADH, via FMN and iron-sulfur (Fe-S) centers, to quinones in the respiratory chain. The immediate electron acceptor for the enzyme in this species is believed to be ubiquinone. Couples the redox reaction to proton translocation (for every two electrons transferred, four hydrogen ions are translocated across the cytoplasmic membrane), and thus conserves the redox energy in a proton gradient. This Brucella melitensis biotype 1 (strain ATCC 23456 / CCUG 17765 / NCTC 10094 / 16M) protein is NADH-quinone oxidoreductase subunit D.